The following is a 372-amino-acid chain: tRNA pseudouridine synthase D (372 aa).

Aspartate 85 acts as the Nucleophile in catalysis. In terms of domain architecture, TRUD spans 160–330; the sequence is GFANYFGYQR…MQGSRRFMWG (171 aa).

Belongs to the pseudouridine synthase TruD family.

It catalyses the reaction uridine(13) in tRNA = pseudouridine(13) in tRNA. Functionally, responsible for synthesis of pseudouridine from uracil-13 in transfer RNAs. This Campylobacter jejuni subsp. jejuni serotype O:2 (strain ATCC 700819 / NCTC 11168) protein is tRNA pseudouridine synthase D.